A 282-amino-acid polypeptide reads, in one-letter code: Small ribosomal subunit protein uS2 (282 aa).

A disordered region spans residues 260 to 282; that stretch reads KRRRSKVYKEEEREVVTNEDESR. Over residues 266–282 the composition is skewed to basic and acidic residues; the sequence is VYKEEEREVVTNEDESR.

Belongs to the universal ribosomal protein uS2 family.

The polypeptide is Small ribosomal subunit protein uS2 (Wolbachia sp. subsp. Drosophila simulans (strain wRi)).